Here is a 415-residue protein sequence, read N- to C-terminus: Phosphoglycerate kinase (415 aa).

Substrate-binding positions include 27-29 (DIN), Arg-44, 67-70 (HQGR), Arg-124, and Arg-164. ATP-binding positions include Glu-336 and 362 to 365 (GGHM).

The protein belongs to the phosphoglycerate kinase family. Monomer.

It is found in the cytoplasm. The catalysed reaction is (2R)-3-phosphoglycerate + ATP = (2R)-3-phospho-glyceroyl phosphate + ADP. Its pathway is carbohydrate degradation; glycolysis; pyruvate from D-glyceraldehyde 3-phosphate: step 2/5. This is Phosphoglycerate kinase from Sulfurisphaera tokodaii (strain DSM 16993 / JCM 10545 / NBRC 100140 / 7) (Sulfolobus tokodaii).